Reading from the N-terminus, the 215-residue chain is ATP phosphoribosyltransferase (215 aa).

The protein belongs to the ATP phosphoribosyltransferase family. Short subfamily. In terms of assembly, heteromultimer composed of HisG and HisZ subunits.

Its subcellular location is the cytoplasm. It carries out the reaction 1-(5-phospho-beta-D-ribosyl)-ATP + diphosphate = 5-phospho-alpha-D-ribose 1-diphosphate + ATP. It participates in amino-acid biosynthesis; L-histidine biosynthesis; L-histidine from 5-phospho-alpha-D-ribose 1-diphosphate: step 1/9. In terms of biological role, catalyzes the condensation of ATP and 5-phosphoribose 1-diphosphate to form N'-(5'-phosphoribosyl)-ATP (PR-ATP). Has a crucial role in the pathway because the rate of histidine biosynthesis seems to be controlled primarily by regulation of HisG enzymatic activity. The chain is ATP phosphoribosyltransferase (hisG) from Clostridium acetobutylicum (strain ATCC 824 / DSM 792 / JCM 1419 / IAM 19013 / LMG 5710 / NBRC 13948 / NRRL B-527 / VKM B-1787 / 2291 / W).